We begin with the raw amino-acid sequence, 91 residues long: Hepcidin-2 (91 aa).

An N-terminal signal peptide occupies residues 1–24 (MKLSNVFLAAVVILTCVCVFQITA). Residues 25-64 (VPFIQQVQDEHHVESEELQENQHLTEAEHRLTDPLVLFRT) constitute a propeptide that is removed on maturation. 4 cysteine pairs are disulfide-bonded: cysteine 73/cysteine 89, cysteine 76/cysteine 79, cysteine 77/cysteine 85, and cysteine 80/cysteine 88.

Belongs to the hepcidin family.

It is found in the secreted. In terms of biological role, seems to act as a signaling molecule involved in the maintenance of iron homeostasis. Seems to be required in conjunction with HFE to regulate both intestinal iron absorption and iron storage in macrophages. May also have antimicrobial activity. This chain is Hepcidin-2 (hamp2), found in Danio rerio (Zebrafish).